The following is a 140-amino-acid chain: Cytochrome c oxidase subunit 6, mitochondrial (140 aa).

This sequence belongs to the cytochrome c oxidase subunit 5A family. As to quaternary structure, component of the cytochrome c oxidase (complex IV, CIV), a multisubunit enzyme composed of a catalytic core of 3 subunits and several supernumerary subunits. The complex exists as a monomer or a dimer and forms supercomplexes (SCs) in the inner mitochondrial membrane with ubiquinol-cytochrome c oxidoreductase (cytochrome b-c1 complex, complex III, CIII).

The protein localises to the mitochondrion inner membrane. Its pathway is energy metabolism; oxidative phosphorylation. Component of the cytochrome c oxidase, the last enzyme in the mitochondrial electron transport chain which drives oxidative phosphorylation. The respiratory chain contains 3 multisubunit complexes succinate dehydrogenase (complex II, CII), ubiquinol-cytochrome c oxidoreductase (cytochrome b-c1 complex, complex III, CIII) and cytochrome c oxidase (complex IV, CIV), that cooperate to transfer electrons derived from NADH and succinate to molecular oxygen, creating an electrochemical gradient over the inner membrane that drives transmembrane transport and the ATP synthase. Cytochrome c oxidase is the component of the respiratory chain that catalyzes the reduction of oxygen to water. Electrons originating from reduced cytochrome c in the intermembrane space (IMS) are transferred via the dinuclear copper A center (CU(A)) of subunit 2 and heme A of subunit 1 to the active site in subunit 1, a binuclear center (BNC) formed by heme A3 and copper B (CU(B)). The BNC reduces molecular oxygen to 2 water molecules using 4 electrons from cytochrome c in the IMS and 4 protons from the mitochondrial matrix. This is Cytochrome c oxidase subunit 6, mitochondrial (cox6) from Schizosaccharomyces pombe (strain 972 / ATCC 24843) (Fission yeast).